Here is a 792-residue protein sequence, read N- to C-terminus: Phenylalanine--tRNA ligase beta subunit (792 aa).

In terms of domain architecture, tRNA-binding spans 39-147; the sequence is AAAFSGVVVG…DNAPIGQDIR (109 aa). Residues 400-475 form the B5 domain; it reads PERPAVRLRP…RLHGYDAIPA (76 aa). Mg(2+)-binding residues include D453, D459, E462, and E463. An FDX-ACB domain is found at 698–791; sequence SRQPAVTRDV…TETSLGARLR (94 aa).

This sequence belongs to the phenylalanyl-tRNA synthetase beta subunit family. Type 1 subfamily. In terms of assembly, tetramer of two alpha and two beta subunits. It depends on Mg(2+) as a cofactor.

The protein localises to the cytoplasm. The enzyme catalyses tRNA(Phe) + L-phenylalanine + ATP = L-phenylalanyl-tRNA(Phe) + AMP + diphosphate + H(+). This is Phenylalanine--tRNA ligase beta subunit from Aromatoleum aromaticum (strain DSM 19018 / LMG 30748 / EbN1) (Azoarcus sp. (strain EbN1)).